The primary structure comprises 796 residues: Probable phosphoketolase 2 (796 aa).

Belongs to the XFP family. The cofactor is thiamine diphosphate.

The polypeptide is Probable phosphoketolase 2 (Lactiplantibacillus plantarum (strain ATCC BAA-793 / NCIMB 8826 / WCFS1) (Lactobacillus plantarum)).